Reading from the N-terminus, the 344-residue chain is L-rhamnose-proton symporter (344 aa).

The next 10 helical transmembrane spans lie at 4 to 24, 38 to 58, 68 to 88, 101 to 121, 137 to 157, 175 to 195, 214 to 234, 259 to 279, 290 to 310, and 323 to 343; these read AITM…CFYA, WSVG…ALLL, FSLS…IGNI, MGIG…TPII, TLLG…AGQL, LVLA…MNAA, LPSY…FCFI, VLLS…YAWG, ISWM…GLVL, and VLSL…IGMA.

It belongs to the L-rhamnose transporter (TC 2.A.7.6) family.

Its subcellular location is the cell inner membrane. It carries out the reaction L-rhamnopyranose(in) + H(+)(in) = L-rhamnopyranose(out) + H(+)(out). Its function is as follows. Uptake of L-rhamnose across the cytoplasmic membrane with the concomitant transport of protons into the cell (symport system). The polypeptide is L-rhamnose-proton symporter (Escherichia coli O9:H4 (strain HS)).